An 84-amino-acid polypeptide reads, in one-letter code: Large ribosomal subunit protein bL27 (84 aa).

The interval 1-20 is disordered; that stretch reads MAHKKAGGSTRNGRDSNPKY.

This sequence belongs to the bacterial ribosomal protein bL27 family.

This chain is Large ribosomal subunit protein bL27, found in Francisella tularensis subsp. tularensis (strain FSC 198).